The following is a 553-amino-acid chain: Putative transport protein YidE (553 aa).

Transmembrane regions (helical) follow at residues 4–24 (IALTVSVLALVAVVGLWIGNI), 28–48 (GVGFGIGGVLFGGIIVGHFVD), 65–85 (FGLILFVYTIGIQVGPGFFAS), 95–115 (LFAVLIVIMGGLVTAILHKIF), and 158–178 (MSYAMAYPFGICGILLTMWLM). RCK C-terminal domains lie at 192 to 276 (KHES…VIGK) and 279 to 361 (DTSL…VVGN). 6 helical membrane passes run 371 to 391 (MLPVFIGIGLGVLLGSIPLFV), 393 to 413 (GFPVALKLGLAGGPLIMALIL), 437 to 457 (LGIVLFLAVVGLKSGGDFVDT), 464 to 484 (LSWIGYGIFITAIPLITVGLL), 493 to 513 (YLTLCGMLAGSMTDPPALAFA), and 533 to 553 (LVMFLRIITPQLLAVIFWGMG).

This sequence belongs to the AAE transporter (TC 2.A.81) family. YidE subfamily.

Its subcellular location is the cell membrane. This is Putative transport protein YidE from Salmonella heidelberg (strain SL476).